Reading from the N-terminus, the 599-residue chain is Glucose-6-phosphate 1-dehydrogenase 3, chloroplastic (599 aa).

Residues 1–18 are compositionally biased toward low complexity; sequence MSSLSCPTYRSRTSSSSP. A disordered region spans residues 1–23; sequence MSSLSCPTYRSRTSSSSPFLSNH. The transit peptide at 1 to 66 directs the protein to the chloroplast; the sequence is MSSLSCPTYR…RSQRRSVQSS (66 aa). N-acetylvaline is present on Val-67. NADP(+) is bound by residues 119 to 126 and Arg-153; that span reads GASGDLAK. A disulfide bridge connects residues Cys-171 and Cys-179. Lys-256 provides a ligand contact to NADP(+). D-glucose 6-phosphate-binding positions include Lys-256, 286–290, Glu-324, and Asp-343; that span reads HYLGK. His-348 acts as the Proton acceptor in catalysis. An NADP(+)-binding site is contributed by Lys-441. Positions 444 and 449 each coordinate D-glucose 6-phosphate. Arg-454 and Arg-483 together coordinate NADP(+). Residue Gln-485 coordinates D-glucose 6-phosphate. NADP(+) contacts are provided by residues 491 to 493 and Arg-576; that span reads YLK.

Belongs to the glucose-6-phosphate dehydrogenase family. Forms homodimer. Interacts with G6PD1. In terms of tissue distribution, expressed in roots, flowers and siliques.

It is found in the plastid. The protein resides in the chloroplast stroma. The enzyme catalyses D-glucose 6-phosphate + NADP(+) = 6-phospho-D-glucono-1,5-lactone + NADPH + H(+). It functions in the pathway carbohydrate degradation; pentose phosphate pathway; D-ribulose 5-phosphate from D-glucose 6-phosphate (oxidative stage): step 1/3. Regulated by metabolites. Post-translationally inactivated by cysteine-mediated redox modification via the ferredoxin-thioredoxin system in the light and this avoids futile cycles with photosynthetic CO2 fixation. In terms of biological role, catalyzes the rate-limiting step of the oxidative pentose-phosphate pathway, which represents a route for the dissimilation of carbohydrates besides glycolysis. The main function of this enzyme is to provide reducing power (NADPH) and pentose phosphates for fatty acid and nucleic acid synthesis which are involved in membrane synthesis and cell division. The protein is Glucose-6-phosphate 1-dehydrogenase 3, chloroplastic of Arabidopsis thaliana (Mouse-ear cress).